We begin with the raw amino-acid sequence, 338 residues long: RNA 3'-terminal phosphate cyclase (338 aa).

Residues Gln103 and 283-287 (YLADQ) contribute to the ATP site. The active-site Tele-AMP-histidine intermediate is His308.

Belongs to the RNA 3'-terminal cyclase family. Type 1 subfamily.

Its subcellular location is the cytoplasm. The enzyme catalyses a 3'-end 3'-phospho-ribonucleotide-RNA + ATP = a 3'-end 2',3'-cyclophospho-ribonucleotide-RNA + AMP + diphosphate. Functionally, catalyzes the conversion of 3'-phosphate to a 2',3'-cyclic phosphodiester at the end of RNA. The mechanism of action of the enzyme occurs in 3 steps: (A) adenylation of the enzyme by ATP; (B) transfer of adenylate to an RNA-N3'P to produce RNA-N3'PP5'A; (C) and attack of the adjacent 2'-hydroxyl on the 3'-phosphorus in the diester linkage to produce the cyclic end product. The biological role of this enzyme is unknown but it is likely to function in some aspects of cellular RNA processing. The protein is RNA 3'-terminal phosphate cyclase of Shigella boydii serotype 4 (strain Sb227).